We begin with the raw amino-acid sequence, 515 residues long: Thioredoxin domain-containing protein 2 (515 aa).

The disordered stretch occupies residues methionine 1–serine 23. 2 positions are modified to phosphoserine: serine 14 and serine 39. The disordered stretch occupies residues threonine 51 to valine 390. Composition is skewed to polar residues over residues phenylalanine 61 to threonine 75 and lysine 85 to threonine 136. 21 tandem repeats follow at residues glutamine 92–lysine 106, glutamine 107–threonine 121, histidine 122–threonine 136, histidine 137–isoleucine 151, glutamine 152–isoleucine 166, glutamine 167–isoleucine 181, glutamine 182–isoleucine 196, glutamine 197–isoleucine 211, glutamine 212–isoleucine 226, glutamine 227–valine 241, proline 242–valine 256, glutamine 257–valine 271, glutamine 272–isoleucine 286, glutamine 287–isoleucine 301, glutamine 302–valine 316, glutamine 317–isoleucine 331, glutamine 332–isoleucine 346, proline 347–glutamine 362, serine 363–isoleucine 375, glutamine 376–valine 390, and glutamine 391–glutamate 405. The tract at residues glutamine 92 to glutamate 405 is 21 X 15 AA approximate tandem repeat of Q-P-K-X-G-D-I-P-K-S-[PS]-E-[KE]-X-I. 2 stretches are compositionally biased toward basic and acidic residues: residues histidine 137–valine 293 and glutamine 302–glutamate 358. Serine 146 is subject to Phosphoserine. The segment covering isoleucine 375–lysine 384 has biased composition (polar residues). The 118-residue stretch at leucine 398 to lysine 515 folds into the Thioredoxin domain. A disulfide bond links cysteine 442 and cysteine 445.

As to expression, testis-specific. Strongly expressed in the testicular seminiferous tubules, mostly in the round spermatids.

It localises to the cytoplasm. Functionally, probably plays a regulatory role in sperm development. May participate in regulation of fibrous sheath (FS) assembly by supporting the formation of disulfide bonds during sperm tail morphogenesis. May also be required to rectify incorrect disulfide pairing and generate suitable pairs between the FS constituents. Can reduce disulfide bonds in vitro in the presence of NADP and thioredoxin reductase. The protein is Thioredoxin domain-containing protein 2 (Txndc2) of Mus musculus (Mouse).